Here is a 300-residue protein sequence, read N- to C-terminus: 17-beta-hydroxysteroid dehydrogenase 13 (300 aa).

The N-terminal stretch at 1–19 is a signal peptide; sequence MNLILELLLLVGIIIYSYL. Ser33 carries the phosphoserine modification. NAD(+) is bound at residue 40 to 67; that stretch reads LITGAGHGIGRLTAYEFAKQKSRLVLWD. Residue Ser69 is modified to Phosphoserine. The residue at position 79 (Lys79) is an N6-acetyllysine. Substrate is bound at residue Ser172. Residue Tyr185 is the Proton acceptor of the active site. Position 189 (Lys189) interacts with NAD(+).

Belongs to the short-chain dehydrogenases/reductases (SDR) family.

It is found in the lipid droplet. The protein localises to the endoplasmic reticulum. The enzyme catalyses 17beta-estradiol + NAD(+) = estrone + NADH + H(+). The catalysed reaction is all-trans-retinol + NAD(+) = all-trans-retinal + NADH + H(+). It catalyses the reaction all-trans-retinal + NAD(+) + H2O = all-trans-retinoate + NADH + 2 H(+). Its function is as follows. Plays a pivotal role in hepatic lipid metabolism. In vitro, it catalyzes the oxidation of a variety of lipid substrates, including 17beta-estradiol, retinol, retinal, and leukotriene B4. The sequence is that of 17-beta-hydroxysteroid dehydrogenase 13 (Hsd17b13) from Rattus norvegicus (Rat).